A 482-amino-acid polypeptide reads, in one-letter code: ATP-dependent rRNA helicase rrp3 (482 aa).

Residues 1–55 (MSSVKRRKTEKNTSSGLKSKQAKEPKEASPLSSPEPTEENQNNEIEEGTEEEEVT) form a disordered region. A compositionally biased stretch (acidic residues) spans 44–53 (EIEEGTEEEE). The Q motif signature appears at 56–84 (KSFKDLGIVDSLCEACDTLGYKAPTPIQR). The region spanning 87 to 258 (IPLALQGRDL…RASLKDPLRV (172 aa)) is the Helicase ATP-binding domain. 100–107 (AETGSGKT) lines the ATP pocket. Residues 206–209 (DEAD) carry the DEAD box motif. Residues 282–430 (HKDTYLIYLL…EYQTVKDEVM (149 aa)) enclose the Helicase C-terminal domain. Composition is skewed to basic and acidic residues over residues 444-456 (RNEMKNLHEDRGK) and 472-482 (RGRDEMDREEG). The tract at residues 444 to 482 (RNEMKNLHEDRGKKGAVLKGRRPANGAKRGRDEMDREEG) is disordered.

Belongs to the DEAD box helicase family. DDX47/RRP3 subfamily. In terms of assembly, interacts with the SSU processome.

It is found in the nucleus. The catalysed reaction is ATP + H2O = ADP + phosphate + H(+). Functionally, ATP-dependent rRNA helicase required for pre-ribosomal RNA processing. Involved in the maturation of the 35S-pre-rRNA and to its cleavage to mature 18S rRNA. This is ATP-dependent rRNA helicase rrp3 from Sclerotinia sclerotiorum (strain ATCC 18683 / 1980 / Ss-1) (White mold).